Here is a 180-residue protein sequence, read N- to C-terminus: Small ribosomal subunit protein bS21c (180 aa).

Residues 1–79 constitute a chloroplast transit peptide; the sequence is MASTSSLLNF…PSLAFSNTLY (79 aa). Residues 14-45 show a composition bias toward low complexity; the sequence is LFPSNTSLPPSSNPKFPNPNSLSSQQNSISIS. Disordered regions lie at residues 14–49 and 124–180; these read LFPSNTSLPPSSNPKFPNPNSLSSQQNSISISSKKH and NKQE…GAPF. Residues 130 to 147 show a composition bias toward basic residues; sequence KRKHREAAKRNSRRRRGP. The segment covering 154 to 166 has biased composition (basic and acidic residues); that stretch reads GKEEATKVDKKED.

Component of the chloroplast small ribosomal subunit (SSU). Mature 70S chloroplast ribosomes of higher plants consist of a small (30S) and a large (50S) subunit. The 30S small subunit contains 1 molecule of ribosomal RNA (16S rRNA) and 24 different proteins. The 50S large subunit contains 3 rRNA molecules (23S, 5S and 4.5S rRNA) and 33 different proteins. bS21c binds directly to 16S ribosomal RNA.

The protein resides in the plastid. It is found in the chloroplast. In terms of biological role, component of the chloroplast ribosome (chloro-ribosome), a dedicated translation machinery responsible for the synthesis of chloroplast genome-encoded proteins, including proteins of the transcription and translation machinery and components of the photosynthetic apparatus. In Spinacia oleracea (Spinach), this protein is Small ribosomal subunit protein bS21c (rps21).